The following is a 410-amino-acid chain: Serine/threonine transporter SstT (410 aa).

A run of 9 helical transmembrane segments spans residues 11–31 (VSLVKRIIIGIIIGITLAVTV), 45–65 (FVGALKAVAPVLVFFLVISAI), 79–99 (ILILYGFSTFLASLTAVVASF), 138–158 (ALLNANYIGILTWAVLLGIAL), 179–199 (IVTWVINFAPIGIMGLVFDAI), 214–234 (LAVLLGTMCFVAFVMNPLIVF), 285–305 (ISIPLGATINMAGAAVTISVL), 327–347 (VLSAIAAAGASGVAGGSLLLI), and 353–373 (LFGIPNDIAMQVVGVGFIIGV).

Belongs to the dicarboxylate/amino acid:cation symporter (DAACS) (TC 2.A.23) family.

Its subcellular location is the cell membrane. It carries out the reaction L-serine(in) + Na(+)(in) = L-serine(out) + Na(+)(out). The enzyme catalyses L-threonine(in) + Na(+)(in) = L-threonine(out) + Na(+)(out). Its function is as follows. Involved in the import of serine and threonine into the cell, with the concomitant import of sodium (symport system). This is Serine/threonine transporter SstT from Geobacillus thermodenitrificans (strain NG80-2).